Here is a 126-residue protein sequence, read N- to C-terminus: Aspartate 1-decarboxylase (126 aa).

The active-site Schiff-base intermediate with substrate; via pyruvic acid is the S25. S25 is modified (pyruvic acid (Ser)). Substrate is bound at residue T57. Y58 acts as the Proton donor in catalysis. 73-75 (GGA) serves as a coordination point for substrate.

Belongs to the PanD family. As to quaternary structure, heterooctamer of four alpha and four beta subunits. It depends on pyruvate as a cofactor. Post-translationally, is synthesized initially as an inactive proenzyme, which is activated by self-cleavage at a specific serine bond to produce a beta-subunit with a hydroxyl group at its C-terminus and an alpha-subunit with a pyruvoyl group at its N-terminus.

The protein localises to the cytoplasm. It catalyses the reaction L-aspartate + H(+) = beta-alanine + CO2. The protein operates within cofactor biosynthesis; (R)-pantothenate biosynthesis; beta-alanine from L-aspartate: step 1/1. Its function is as follows. Catalyzes the pyruvoyl-dependent decarboxylation of aspartate to produce beta-alanine. The polypeptide is Aspartate 1-decarboxylase (Xanthomonas campestris pv. campestris (strain ATCC 33913 / DSM 3586 / NCPPB 528 / LMG 568 / P 25)).